The following is a 528-amino-acid chain: GMP synthase [glutamine-hydrolyzing] (528 aa).

In terms of domain architecture, Glutamine amidotransferase type-1 spans 13–204 (AIVILDFGSQ…VNHICGCEQD (192 aa)). Cys90 serves as the catalytic Nucleophile. Active-site residues include His178 and Glu180. A GMPS ATP-PPase domain is found at 205–403 (WTTNAFIDEA…LGLPEEIVRR (199 aa)). 232–238 (SGGVDSS) contributes to the ATP binding site.

As to quaternary structure, homodimer.

The catalysed reaction is XMP + L-glutamine + ATP + H2O = GMP + L-glutamate + AMP + diphosphate + 2 H(+). Its pathway is purine metabolism; GMP biosynthesis; GMP from XMP (L-Gln route): step 1/1. Catalyzes the synthesis of GMP from XMP. The chain is GMP synthase [glutamine-hydrolyzing] from Synechococcus sp. (strain CC9902).